The sequence spans 300 residues: UDP-N-acetylenolpyruvoylglucosamine reductase (300 aa).

Residues 29-193 form the FAD-binding PCMH-type domain; that stretch reads TGGPADLLVF…LSATFKLRSG (165 aa). R172 is a catalytic residue. The active-site Proton donor is S222. Residue E292 is part of the active site.

Belongs to the MurB family. It depends on FAD as a cofactor.

Its subcellular location is the cytoplasm. The catalysed reaction is UDP-N-acetyl-alpha-D-muramate + NADP(+) = UDP-N-acetyl-3-O-(1-carboxyvinyl)-alpha-D-glucosamine + NADPH + H(+). Its pathway is cell wall biogenesis; peptidoglycan biosynthesis. Its function is as follows. Cell wall formation. In Pediococcus pentosaceus (strain ATCC 25745 / CCUG 21536 / LMG 10740 / 183-1w), this protein is UDP-N-acetylenolpyruvoylglucosamine reductase.